We begin with the raw amino-acid sequence, 473 residues long: Photosystem II CP43 reaction center protein (473 aa).

A propeptide spanning residues 1–14 (MKTLYSLRRFYPVE) is cleaved from the precursor. At threonine 15 the chain carries N-acetylthreonine. Threonine 15 carries the post-translational modification Phosphothreonine. 5 helical membrane-spanning segments follow: residues 69-93 (LFEV…PHLA), 134-155 (LLGP…KDRN), 178-200 (KALY…RKIT), 255-275 (KPFA…LSYS), and 291-312 (WFNN…ASQA). Glutamate 367 is a [CaMn4O5] cluster binding site. A helical transmembrane segment spans residues 447–471 (RARAAAAGFEKGIDRDFEPVLSMTP).

It belongs to the PsbB/PsbC family. PsbC subfamily. In terms of assembly, PSII is composed of 1 copy each of membrane proteins PsbA, PsbB, PsbC, PsbD, PsbE, PsbF, PsbH, PsbI, PsbJ, PsbK, PsbL, PsbM, PsbT, PsbX, PsbY, PsbZ, Psb30/Ycf12, at least 3 peripheral proteins of the oxygen-evolving complex and a large number of cofactors. It forms dimeric complexes. Requires Binds multiple chlorophylls and provides some of the ligands for the Ca-4Mn-5O cluster of the oxygen-evolving complex. It may also provide a ligand for a Cl- that is required for oxygen evolution. PSII binds additional chlorophylls, carotenoids and specific lipids. as cofactor.

The protein localises to the plastid. It localises to the chloroplast thylakoid membrane. Its function is as follows. One of the components of the core complex of photosystem II (PSII). It binds chlorophyll and helps catalyze the primary light-induced photochemical processes of PSII. PSII is a light-driven water:plastoquinone oxidoreductase, using light energy to abstract electrons from H(2)O, generating O(2) and a proton gradient subsequently used for ATP formation. This Populus trichocarpa (Western balsam poplar) protein is Photosystem II CP43 reaction center protein.